Reading from the N-terminus, the 479-residue chain is Poly(A) polymerase catalytic subunit (479 aa).

Active-site residues include Asp-202 and Asp-204. Residues Asp-202, Asp-204, and Asp-253 each contribute to the Ca(2+) site.

The protein belongs to the poxviridae poly(A) polymerase catalytic subunit family. As to quaternary structure, heterodimer of a large (catalytic) subunit and a small (regulatory) subunit.

The enzyme catalyses RNA(n) + ATP = RNA(n)-3'-adenine ribonucleotide + diphosphate. Functionally, polymerase that creates the 3'-poly(A) tail of mRNA's. This Bos taurus (Bovine) protein is Poly(A) polymerase catalytic subunit (OPG063).